A 284-amino-acid polypeptide reads, in one-letter code: Probable endonuclease 4 (284 aa).

Positions 69, 109, 145, 179, 182, 216, 229, 231, and 261 each coordinate Zn(2+).

This sequence belongs to the AP endonuclease 2 family. Zn(2+) is required as a cofactor.

The enzyme catalyses Endonucleolytic cleavage to 5'-phosphooligonucleotide end-products.. In terms of biological role, endonuclease IV plays a role in DNA repair. It cleaves phosphodiester bonds at apurinic or apyrimidinic (AP) sites, generating a 3'-hydroxyl group and a 5'-terminal sugar phosphate. The chain is Probable endonuclease 4 from Klebsiella pneumoniae (strain 342).